We begin with the raw amino-acid sequence, 448 residues long: Chromosomal replication initiator protein DnaA (448 aa).

The segment at 1–73 is domain I, interacts with DnaA modulators; sequence MNAQLKQLWT…INAIKLITSK (73 aa). The domain II stretch occupies residues 73-109; sequence KKYNIEFSITSEEIFNNQQLKPKSSNDNIVVNDEMTS. Positions 110–326 are domain III, AAA+ region; it reads ILNPKYTFDS…GALIRIVAYS (217 aa). ATP contacts are provided by glycine 154, glycine 156, lysine 157, and threonine 158. A domain IV, binds dsDNA region spans residues 327 to 448; sequence SLTNREISVD…DDLNKKITNN (122 aa).

The protein belongs to the DnaA family. In terms of assembly, oligomerizes as a right-handed, spiral filament on DNA at oriC.

It localises to the cytoplasm. Plays an essential role in the initiation and regulation of chromosomal replication. ATP-DnaA binds to the origin of replication (oriC) to initiate formation of the DNA replication initiation complex once per cell cycle. Binds the DnaA box (a 9 base pair repeat at the origin) and separates the double-stranded (ds)DNA. Forms a right-handed helical filament on oriC DNA; dsDNA binds to the exterior of the filament while single-stranded (ss)DNA is stabiized in the filament's interior. The ATP-DnaA-oriC complex binds and stabilizes one strand of the AT-rich DNA unwinding element (DUE), permitting loading of DNA polymerase. After initiation quickly degrades to an ADP-DnaA complex that is not apt for DNA replication. Binds acidic phospholipids. The sequence is that of Chromosomal replication initiator protein DnaA from Clostridium novyi (strain NT).